Consider the following 484-residue polypeptide: Pyruvate kinase (484 aa).

Residue R33 coordinates substrate. K(+) is bound by residues N35, S37, D67, and T68. Residue 35–38 coordinates ATP; it reads NFSH. Residues R74 and K155 each coordinate ATP. E221 provides a ligand contact to Mg(2+). Substrate-binding residues include G244, D245, and T277. A Mg(2+)-binding site is contributed by D245.

This sequence belongs to the pyruvate kinase family. In terms of assembly, homotetramer. Mg(2+) is required as a cofactor. It depends on K(+) as a cofactor.

It catalyses the reaction pyruvate + ATP = phosphoenolpyruvate + ADP + H(+). Its pathway is carbohydrate degradation; glycolysis; pyruvate from D-glyceraldehyde 3-phosphate: step 5/5. This chain is Pyruvate kinase (pyk), found in Chlamydia pneumoniae (Chlamydophila pneumoniae).